A 474-amino-acid polypeptide reads, in one-letter code: Solute carrier family 49 member A3 (474 aa).

The disordered stretch occupies residues 1-20; it reads MEGESAETEPLIQSSSAADR. A run of 12 helical transmembrane segments spans residues 38-58, 69-89, 105-126, 134-154, 175-195, 201-221, 258-278, 290-310, 326-346, 349-369, 388-408, and 428-448; these read WFILSVLCLLNCSNAMAWLTF, LCVSLPLVNWLSLVFVLAAVV, CSLIGSSWLNACGCVLRVCGVL, VFAVVMCGQTLCALAQPLVIF, LASMANTVGLLLANLLSPLIV, LFLLLLIYSIPAAVACLLATL, WILLLCFGSGIGIFTCFSTLL, GFAGVCGAVSIVCGVAGAFLL, ICMCLTSVSCSAFAVVSQLPA, VLLVLVCCCFGLFGYSVYPVG, LIFTSGQIQAALYLLLLQALA, and VPVLVMAGVCAISSCVFVVFF.

This sequence belongs to the major facilitator superfamily.

The protein resides in the membrane. The polypeptide is Solute carrier family 49 member A3 (slc49a3) (Danio rerio (Zebrafish)).